A 376-amino-acid chain; its full sequence is Erythronate-4-phosphate dehydrogenase (376 aa).

Residues serine 45 and threonine 67 each contribute to the substrate site. Aspartate 147 serves as a coordination point for NAD(+). Residue arginine 209 is part of the active site. NAD(+) is bound at residue aspartate 233. The active site involves glutamate 238. Histidine 255 functions as the Proton donor in the catalytic mechanism. Glycine 258 is a binding site for NAD(+). Tyrosine 259 lines the substrate pocket.

This sequence belongs to the D-isomer specific 2-hydroxyacid dehydrogenase family. PdxB subfamily. As to quaternary structure, homodimer.

It localises to the cytoplasm. The catalysed reaction is 4-phospho-D-erythronate + NAD(+) = (R)-3-hydroxy-2-oxo-4-phosphooxybutanoate + NADH + H(+). It functions in the pathway cofactor biosynthesis; pyridoxine 5'-phosphate biosynthesis; pyridoxine 5'-phosphate from D-erythrose 4-phosphate: step 2/5. Its function is as follows. Catalyzes the oxidation of erythronate-4-phosphate to 3-hydroxy-2-oxo-4-phosphonooxybutanoate. This chain is Erythronate-4-phosphate dehydrogenase, found in Shewanella baltica (strain OS223).